The chain runs to 114 residues: UPF0102 protein Shew_0226 (114 aa).

It belongs to the UPF0102 family.

The polypeptide is UPF0102 protein Shew_0226 (Shewanella loihica (strain ATCC BAA-1088 / PV-4)).